We begin with the raw amino-acid sequence, 423 residues long: Transducer protein Htr13 (423 aa).

Positions 1–19 (MTGPDNSLTDPSASPSTPV) are enriched in polar residues. Positions 1–21 (MTGPDNSLTDPSASPSTPVAS) are disordered. A Methyl-accepting transducer domain is found at 152–388 (AVAELIERAR…ELTMMIDEAA (237 aa)).

It belongs to the methyl-accepting chemotaxis (MCP) protein family. In terms of processing, methylated by CheR.

Its subcellular location is the cytoplasm. Functionally, potentially involved in chemo- or phototactic signal transduction. This Halobacterium salinarum (strain ATCC 29341 / DSM 671 / R1) protein is Transducer protein Htr13 (htr13).